The primary structure comprises 224 residues: ATP-dependent dethiobiotin synthetase BioD (224 aa).

Position 13 to 18 (Asn-13 to Ile-18) interacts with ATP. Residue Thr-17 participates in Mg(2+) binding. Lys-38 is an active-site residue. Residue Ser-42 coordinates substrate. ATP is bound by residues Asp-55, Glu-116–Gly-119, Asn-176–Asn-177, and Asn-211. Mg(2+) contacts are provided by Asp-55 and Glu-116.

Belongs to the dethiobiotin synthetase family. In terms of assembly, homodimer. Mg(2+) is required as a cofactor.

The protein resides in the cytoplasm. It catalyses the reaction (7R,8S)-7,8-diammoniononanoate + CO2 + ATP = (4R,5S)-dethiobiotin + ADP + phosphate + 3 H(+). It functions in the pathway cofactor biosynthesis; biotin biosynthesis; biotin from 7,8-diaminononanoate: step 1/2. Its function is as follows. Catalyzes a mechanistically unusual reaction, the ATP-dependent insertion of CO2 between the N7 and N8 nitrogen atoms of 7,8-diaminopelargonic acid (DAPA, also called 7,8-diammoniononanoate) to form a ureido ring. The protein is ATP-dependent dethiobiotin synthetase BioD of Buchnera aphidicola subsp. Acyrthosiphon pisum (strain 5A).